The primary structure comprises 324 residues: Ribose-phosphate pyrophosphokinase (324 aa).

ATP-binding positions include 45 to 47 (NGE) and 104 to 105 (RQ). Mg(2+)-binding residues include His-138 and Asp-178. Lys-201 is a catalytic residue. Residues Arg-203, Asp-229, and 233–237 (DTGGT) contribute to the D-ribose 5-phosphate site.

Belongs to the ribose-phosphate pyrophosphokinase family. Class I subfamily. Homohexamer. Mg(2+) is required as a cofactor.

The protein localises to the cytoplasm. It catalyses the reaction D-ribose 5-phosphate + ATP = 5-phospho-alpha-D-ribose 1-diphosphate + AMP + H(+). It participates in metabolic intermediate biosynthesis; 5-phospho-alpha-D-ribose 1-diphosphate biosynthesis; 5-phospho-alpha-D-ribose 1-diphosphate from D-ribose 5-phosphate (route I): step 1/1. Involved in the biosynthesis of the central metabolite phospho-alpha-D-ribosyl-1-pyrophosphate (PRPP) via the transfer of pyrophosphoryl group from ATP to 1-hydroxyl of ribose-5-phosphate (Rib-5-P). The protein is Ribose-phosphate pyrophosphokinase of Streptomyces coelicolor (strain ATCC BAA-471 / A3(2) / M145).